The chain runs to 686 residues: MDPKLEERARELRTLLQKASIAYYVHDAPILEDSVYDRLYRELQELERAYPELVTPDSPTQRVGEKPAEHFPTVFHRIPLYSLENAFNPEELEEWQERLLRVLGRAPVPDSRTEGELEYVCELKIDGAALALTYIEGLLERGATRGDGQAGEDITPNVRAIRSIPLRLATADPPPVLEVRGEVYLALAEFERINQERRSAGDPPFANPRNCAAGTLRQLDSRVVAARKLSFFAYALHWPEGWPAGDPPQTQWQCLQQLKELGFPVNPLSQVCRGLGEVIQFYERWRGAQLPYASDGVVVKLNSLRLQEEAGFTQKFPRWAIALKYPAQEVPTRIRAIVASVGRTGAVTPVAELEPVPLAGTLVSRASLHNADRLRELDVHIGDTAIVRKAGEIIPEVVGILKELRPADAVPYSLPSQCPECHTPLVRPPGEAVTRCPNPECPAKLRGQLQHWASRDALDIEGLGEKRAAQLVESLGVRTVADLYRLTPEQLQGLEGMGSRSSQKLVQAIQRSRQQPWERVLYGLGIPHVGVVTAQILAGHFPTPELLAQASAETIAQIYGIGAEVAEAVVAWFAEPAHRRLLQELQALGIPALPQQENPAVSQILAGKKFVITGTLPTLSRQQAKAWIESRGGKVTASVSRQTDYVVVGSDPGSKLEQAQQLGIPLLTEAELLALDPTVESGDLHP.

NAD(+)-binding positions include 33-37 (DSVYD), 82-83 (SL), and Glu-122. The active-site N6-AMP-lysine intermediate is the Lys-124. Residues Arg-145, Glu-182, Lys-300, and Lys-324 each contribute to the NAD(+) site. Residues Cys-418, Cys-421, Cys-436, and Cys-441 each contribute to the Zn(2+) site. A BRCT domain is found at 600-686 (AVSQILAGKK…PTVESGDLHP (87 aa)).

It belongs to the NAD-dependent DNA ligase family. LigA subfamily. Mg(2+) is required as a cofactor. It depends on Mn(2+) as a cofactor.

It carries out the reaction NAD(+) + (deoxyribonucleotide)n-3'-hydroxyl + 5'-phospho-(deoxyribonucleotide)m = (deoxyribonucleotide)n+m + AMP + beta-nicotinamide D-nucleotide.. Functionally, DNA ligase that catalyzes the formation of phosphodiester linkages between 5'-phosphoryl and 3'-hydroxyl groups in double-stranded DNA using NAD as a coenzyme and as the energy source for the reaction. It is essential for DNA replication and repair of damaged DNA. The polypeptide is DNA ligase (Synechococcus sp. (strain JA-2-3B'a(2-13)) (Cyanobacteria bacterium Yellowstone B-Prime)).